The chain runs to 314 residues: DNA-directed RNA polymerase subunit alpha (314 aa).

The alpha N-terminal domain (alpha-NTD) stretch occupies residues 1 to 228 (MIEIEKPRIE…EHLNIFVGLT (228 aa)). Positions 246–314 (EKVLEMSIEE…DLGLGLRKED (69 aa)) are alpha C-terminal domain (alpha-CTD).

The protein belongs to the RNA polymerase alpha chain family. Homodimer. The RNAP catalytic core consists of 2 alpha, 1 beta, 1 beta' and 1 omega subunit. When a sigma factor is associated with the core the holoenzyme is formed, which can initiate transcription.

The catalysed reaction is RNA(n) + a ribonucleoside 5'-triphosphate = RNA(n+1) + diphosphate. DNA-dependent RNA polymerase catalyzes the transcription of DNA into RNA using the four ribonucleoside triphosphates as substrates. The protein is DNA-directed RNA polymerase subunit alpha of Staphylococcus aureus (strain Mu3 / ATCC 700698).